The sequence spans 276 residues: NADPH-dependent 7-cyano-7-deazaguanine reductase (276 aa).

83–85 contacts substrate; that stretch reads IES. 85–86 lines the NADPH pocket; the sequence is SK. The active-site Thioimide intermediate is the C184. D191 acts as the Proton donor in catalysis. Residue 223 to 224 coordinates substrate; that stretch reads HE. Position 252 to 253 (252 to 253) interacts with NADPH; that stretch reads RG.

This sequence belongs to the GTP cyclohydrolase I family. QueF type 2 subfamily. Homodimer.

Its subcellular location is the cytoplasm. It carries out the reaction 7-aminomethyl-7-carbaguanine + 2 NADP(+) = 7-cyano-7-deazaguanine + 2 NADPH + 3 H(+). It participates in tRNA modification; tRNA-queuosine biosynthesis. Functionally, catalyzes the NADPH-dependent reduction of 7-cyano-7-deazaguanine (preQ0) to 7-aminomethyl-7-deazaguanine (preQ1). In Pseudomonas paraeruginosa (strain DSM 24068 / PA7) (Pseudomonas aeruginosa (strain PA7)), this protein is NADPH-dependent 7-cyano-7-deazaguanine reductase.